The sequence spans 288 residues: Acetyl-coenzyme A carboxylase carboxyl transferase subunit beta (288 aa).

In terms of domain architecture, CoA carboxyltransferase N-terminal spans Leu24–Ala288.

Belongs to the AccD/PCCB family. As to quaternary structure, acetyl-CoA carboxylase is a heterohexamer composed of biotin carboxyl carrier protein (AccB), biotin carboxylase (AccC) and two subunits each of ACCase subunit alpha (AccA) and ACCase subunit beta (AccD).

It localises to the cytoplasm. The catalysed reaction is N(6)-carboxybiotinyl-L-lysyl-[protein] + acetyl-CoA = N(6)-biotinyl-L-lysyl-[protein] + malonyl-CoA. The protein operates within lipid metabolism; malonyl-CoA biosynthesis; malonyl-CoA from acetyl-CoA: step 1/1. Component of the acetyl coenzyme A carboxylase (ACC) complex. Biotin carboxylase (BC) catalyzes the carboxylation of biotin on its carrier protein (BCCP) and then the CO(2) group is transferred by the transcarboxylase to acetyl-CoA to form malonyl-CoA. In Methylocella silvestris (strain DSM 15510 / CIP 108128 / LMG 27833 / NCIMB 13906 / BL2), this protein is Acetyl-coenzyme A carboxylase carboxyl transferase subunit beta.